A 247-amino-acid chain; its full sequence is uncharacterized protein (247 aa).

This is an uncharacterized protein from Acidianus bottle-shaped virus (isolate Italy/Pozzuoli) (ABV).